Reading from the N-terminus, the 187-residue chain is Resolvase OPG149 (187 aa).

This sequence belongs to the RuvC family. Poxviruses-type subfamily. Requires Mg(2+) as cofactor.

In terms of biological role, plays a role in DNA replication by cleaving viral DNA concatamers to yield unit-length viral genomes. The concatamer junctions contain inverted repeat sequences that can be extruded as cruciforms, yielding Holliday junctions that A22 protein cleaves. This chain is Resolvase OPG149 (OPG149), found in Variola virus (isolate Human/India/Ind3/1967) (VARV).